The sequence spans 739 residues: Phosphoribosylformylglycinamidine synthase subunit PurL (739 aa).

H53 is an active-site residue. ATP contacts are provided by Y56 and K95. Residue E97 participates in Mg(2+) binding. Substrate is bound by residues 98–101 and R120; that span reads SHNH. The active-site Proton acceptor is the H99. Residue D121 participates in Mg(2+) binding. Residue Q244 coordinates substrate. A Mg(2+)-binding site is contributed by D274. 318–320 is a binding site for substrate; the sequence is ESQ. Positions 501 and 538 each coordinate ATP. N539 contributes to the Mg(2+) binding site. Position 541 (S541) interacts with substrate.

This sequence belongs to the FGAMS family. As to quaternary structure, monomer. Part of the FGAM synthase complex composed of 1 PurL, 1 PurQ and 2 PurS subunits.

It localises to the cytoplasm. The enzyme catalyses N(2)-formyl-N(1)-(5-phospho-beta-D-ribosyl)glycinamide + L-glutamine + ATP + H2O = 2-formamido-N(1)-(5-O-phospho-beta-D-ribosyl)acetamidine + L-glutamate + ADP + phosphate + H(+). It functions in the pathway purine metabolism; IMP biosynthesis via de novo pathway; 5-amino-1-(5-phospho-D-ribosyl)imidazole from N(2)-formyl-N(1)-(5-phospho-D-ribosyl)glycinamide: step 1/2. Functionally, part of the phosphoribosylformylglycinamidine synthase complex involved in the purines biosynthetic pathway. Catalyzes the ATP-dependent conversion of formylglycinamide ribonucleotide (FGAR) and glutamine to yield formylglycinamidine ribonucleotide (FGAM) and glutamate. The FGAM synthase complex is composed of three subunits. PurQ produces an ammonia molecule by converting glutamine to glutamate. PurL transfers the ammonia molecule to FGAR to form FGAM in an ATP-dependent manner. PurS interacts with PurQ and PurL and is thought to assist in the transfer of the ammonia molecule from PurQ to PurL. This Listeria innocua serovar 6a (strain ATCC BAA-680 / CLIP 11262) protein is Phosphoribosylformylglycinamidine synthase subunit PurL.